The primary structure comprises 2199 residues: DNA polymerase epsilon catalytic subunit A (2199 aa).

4 residues coordinate Zn(2+): Cys2069, Cys2072, Cys2104, and Cys2107. Residues 2069 to 2107 form a CysA-type zinc finger; it reads CKQCGVHQDFDLCLHEHLWPTRDDMGTLVFSDGWSCSSC. Residues Cys2138, Cys2141, Cys2153, and Cys2155 each contribute to the [4Fe-4S] cluster site. The short motif at 2138-2155 is the CysB motif element; that stretch reads CSKCKTVKQWSLKERCSC.

Belongs to the DNA polymerase type-B family. Heterotetramer. Consists of 4 subunits: pol2, dpb2, dpb3 and dpb4. Requires [4Fe-4S] cluster as cofactor.

The protein resides in the nucleus. It carries out the reaction DNA(n) + a 2'-deoxyribonucleoside 5'-triphosphate = DNA(n+1) + diphosphate. In terms of biological role, DNA polymerase II participates in chromosomal DNA replication. The chain is DNA polymerase epsilon catalytic subunit A (pol2) from Schizosaccharomyces pombe (strain 972 / ATCC 24843) (Fission yeast).